We begin with the raw amino-acid sequence, 757 residues long: Neutral ceramidase 2 (757 aa).

The N-terminal stretch at 1 to 25 is a signal peptide; the sequence is MAVSLPLFQFILFLLLLLLSRTVYA. N-linked (GlcNAc...) asparagine glycosylation occurs at N311. S330 functions as the Nucleophile in the catalytic mechanism. N348 and N657 each carry an N-linked (GlcNAc...) asparagine glycan.

Belongs to the neutral ceramidase family.

It localises to the secreted. It is found in the endoplasmic reticulum. The protein resides in the golgi apparatus. The enzyme catalyses an N-acylsphing-4-enine + H2O = sphing-4-enine + a fatty acid. Its function is as follows. Hydrolyzes the sphingolipid ceramide into sphingosine and free fatty acid. The polypeptide is Neutral ceramidase 2 (Arabidopsis thaliana (Mouse-ear cress)).